The following is a 357-amino-acid chain: Dihydroorotate dehydrogenase (quinone) (357 aa).

FMN contacts are provided by residues 66 to 70 (AGFDK) and threonine 90. Lysine 70 contributes to the substrate binding site. Residue 115 to 119 (NRMGF) coordinates substrate. Positions 143 and 176 each coordinate FMN. Residue asparagine 176 participates in substrate binding. Catalysis depends on serine 179, which acts as the Nucleophile. Asparagine 181 is a binding site for substrate. Positions 212 and 240 each coordinate FMN. 241-242 (NT) is a binding site for substrate. FMN is bound by residues glycine 264, glycine 293, and 314-315 (YT).

It belongs to the dihydroorotate dehydrogenase family. Type 2 subfamily. In terms of assembly, monomer. FMN serves as cofactor.

It is found in the cell membrane. The enzyme catalyses (S)-dihydroorotate + a quinone = orotate + a quinol. It functions in the pathway pyrimidine metabolism; UMP biosynthesis via de novo pathway; orotate from (S)-dihydroorotate (quinone route): step 1/1. In terms of biological role, catalyzes the conversion of dihydroorotate to orotate with quinone as electron acceptor. This Mycobacterium tuberculosis (strain ATCC 25177 / H37Ra) protein is Dihydroorotate dehydrogenase (quinone).